Reading from the N-terminus, the 849-residue chain is DNA mismatch repair protein MutS (849 aa).

602 to 609 lines the ATP pocket; the sequence is GPNMSGKS.

This sequence belongs to the DNA mismatch repair MutS family.

Its function is as follows. This protein is involved in the repair of mismatches in DNA. It is possible that it carries out the mismatch recognition step. This protein has a weak ATPase activity. This Streptococcus sanguinis (strain SK36) protein is DNA mismatch repair protein MutS.